Reading from the N-terminus, the 543-residue chain is Probable protein kinase UbiB (543 aa).

Residues aspartate 123–leucine 500 enclose the Protein kinase domain. Residues leucine 129 to valine 137 and lysine 152 contribute to the ATP site. The active-site Proton acceptor is aspartate 286. The next 2 helical transmembrane spans lie at phenylalanine 499–glutamate 519 and leucine 521–serine 541.

The protein belongs to the ABC1 family. UbiB subfamily.

The protein localises to the cell inner membrane. It participates in cofactor biosynthesis; ubiquinone biosynthesis [regulation]. Functionally, is probably a protein kinase regulator of UbiI activity which is involved in aerobic coenzyme Q (ubiquinone) biosynthesis. The sequence is that of Probable protein kinase UbiB from Tolumonas auensis (strain DSM 9187 / NBRC 110442 / TA 4).